The chain runs to 766 residues: Leucine-rich repeat and fibronectin type III domain-containing protein 1 (766 aa).

A signal peptide spans 1 to 31 (MAPGPFSSGLLSPPPAALPFLLLLWAGASRG). The LRRNT domain occupies 32 to 65 (QPCPGRCICQNVAPTLTMLCAKTGLLFVPPAIDR). Residues 32–536 (QPCPGRCICQ…LRAHFLGGTM (505 aa)) are Extracellular-facing. LRR repeat units follow at residues 66–87 (RVVE…DFAN), 90–111 (SLVH…AFAD), 114–135 (ALRA…QLRG), 138–159 (NLRH…AFDA), 163–184 (TVED…AVGQ), 187–208 (NLNT…TFVQ), and 211–232 (KLVR…GLFL). N-linked (GlcNAc...) asparagine glycosylation occurs at Asn-87. Residues 252–298 (NPLHCNCELLWLRRLTREDDLETCATPEHLTDRYFWSIPEEEFLCEP) form the LRRCT domain. Positions 299–386 (PLITRQAGGR…GEATAPVEVC (88 aa)) constitute an Ig-like domain. An intrachain disulfide couples Cys-321 to Cys-370. An N-linked (GlcNAc...) asparagine glycan is attached at Asn-343. Residues 397–422 (PAAPPPLTEPGSSDIATPGRPGANDS) are disordered. The Fibronectin type-III domain occupies 424 to 520 (TERRLVAAEL…GCVQFTTAGD (97 aa)). A helical membrane pass occupies residues 537-557 (IIAIGGVIVASVLVFIVLLMI). Residues 558-766 (RYKVYGDGDS…STEWMLESTV (209 aa)) are Cytoplasmic-facing. Disordered stretches follow at residues 568–601 (RRIK…PPAP) and 646–742 (CLLP…GEDG). Position 713 is a phosphoserine (Ser-713). Residues 714–727 (YPRRARRTKRHRST) are compositionally biased toward basic residues.

The protein belongs to the LRFN family. In terms of assembly, forms heteromeric complexes with LRFN2, LRFN4 and LRFN5; binding to LRFN2 and LRFN5 may be weaker than that to LRFN4. Also interacts with LRFN3. Forms homomeric complexes, but not across cell junctions. Interacts with DLG1, DLG2 and DLG4, but not with MAGI2, not CASK. Interacts with DLG3. Interacts with 2 AMPA receptor subunits GRIA1 and GRIA2 and NMDA receptor subunit GRIN1. Post-translationally, glycosylated. As to expression, mainly expressed in brain (at protein level) and testis. In brain, found in cerebral cortex (including pyramidal neurons), hippocampus (including CA3 and CA1 neurons), dentate gyrus, cerebellum (including Purkinje neurons) (at protein level) (at protein level). Also expressed in the olfactory bulb.

It localises to the membrane. The protein localises to the synapse. Its subcellular location is the postsynaptic density membrane. In terms of biological role, promotes neurite outgrowth in hippocampal neurons. Involved in the regulation of the differentiation and maintenance of excitatory synapses. Induces the clustering of excitatory postsynaptic proteins, including DLG4, DLGAP1, GRIA1 and GRIN1. The protein is Leucine-rich repeat and fibronectin type III domain-containing protein 1 (Lrfn1) of Rattus norvegicus (Rat).